A 62-amino-acid polypeptide reads, in one-letter code: Conotoxin Qc5.2 (62 aa).

Residues 1–22 form the signal peptide; that stretch reads MRCVPVFIILLLLSPSAPSVDA. Positions 23–48 are excised as a propeptide; the sequence is HPMTKDDVPQASLHDDAKRTLQVPWM. Valine 60 carries the valine amide modification.

This sequence belongs to the conotoxin T superfamily. Contains 2 disulfide bonds that can be either 'C1-C3, C2-C4' or 'C1-C4, C2-C3', since these disulfide connectivities have been observed for conotoxins with cysteine framework V (for examples, see AC P0DQQ7 and AC P81755). Expressed by the venom duct.

It localises to the secreted. This is Conotoxin Qc5.2 from Conus quercinus (Oak cone).